Here is a 247-residue protein sequence, read N- to C-terminus: PF03932 family protein CutC (247 aa).

The protein belongs to the CutC family.

The protein localises to the cytoplasm. This Enterobacter sp. (strain 638) protein is PF03932 family protein CutC.